The chain runs to 259 residues: MLFLLSPAKSLDFEKPAAPVPHTQPLFIPQAAELIDILKKKSPRQIASLMSLSDTLAGLNVARYQAWVPKFTAKNAKQAVLAFNGDVYEGLDAKSLPVDDLKWLQDHVCILSGLYGVLRPLDYMQPYRLEMGTKLANPQGKDLYQFWGAQISDYLNIRLHKNAAPVVVNLASQEYFRAVDRKALQARVLECVFQEYRGGQYKIISFYAKRARGLMARFAAEHRLSKPKQLEGFDAEGYAFDAAASEPDRLVFRRQQPLS.

Belongs to the UPF0246 family.

This is UPF0246 protein Rfer_2372 from Albidiferax ferrireducens (strain ATCC BAA-621 / DSM 15236 / T118) (Rhodoferax ferrireducens).